Here is a 2058-residue protein sequence, read N- to C-terminus: E3 ubiquitin-protein ligase ubr-1 (2058 aa).

The segment at 93–164 (QICGHVFKNG…EGYACANHEK (72 aa)) adopts a UBR-type zinc-finger fold. The interval 1107-1175 (VPEAAPAPEN…TPSEKSETVV (69 aa)) is disordered. Residues 1108–1119 (PEAAPAPENKPA) show a composition bias toward low complexity. Basic and acidic residues-rich tracts occupy residues 1123–1138 (EEIKAKRAARAAEMRQ) and 1153–1175 (KKIEDEEKKDESQTPSEKSETVV). An RING-type; atypical zinc finger spans residues 1217-1335 (LTCILCQEDE…GEYQCPLCKR (119 aa)). Disordered regions lie at residues 1381–1416 (LSSESVSKKGHSRKRSHSERSLLDLEKLSKDPDTAN) and 1475–1499 (PAATPETIPAIGSSSRIPESQESGK). Residues 1388-1397 (KKGHSRKRSH) are compositionally biased toward basic residues. The segment covering 1398 to 1413 (SERSLLDLEKLSKDPD) has biased composition (basic and acidic residues). Polar residues predominate over residues 1486 to 1495 (GSSSRIPESQ). Residues 1695–1715 (ILQIDILSLAISLMMTIGWTW) traverse the membrane as a helical segment.

This sequence belongs to the E3 ubiquitin-protein ligase UBR1-like family. Interacts with ubc-1. Component of a complex containing at least ced-3, ubr-1 and possibly ate-1. Within complex interacts with ced-3 (via the p17 subunit); this interaction is required for the ced-3-mediated cleavage and subsequent degradation of the heterochronic protein lin-28. As to expression, expressed in pharyngeal muscles, body wall muscles and a subset of neurons throughout postembryonic development. Prominently expressed in premotor interneurons, but not expressed in ventral cord motor neurons. Weakly expressed in hypodermal seam cells.

The protein resides in the membrane. It carries out the reaction S-ubiquitinyl-[E2 ubiquitin-conjugating enzyme]-L-cysteine + [acceptor protein]-L-lysine = [E2 ubiquitin-conjugating enzyme]-L-cysteine + N(6)-ubiquitinyl-[acceptor protein]-L-lysine.. Its pathway is protein modification; protein ubiquitination. E3 ubiquitin-protein ligase which is a component of the N-end rule pathway. Recognizes and binds to proteins bearing specific N-terminal residues that are destabilizing according to the N-end rule, leading to their ubiquitination and subsequent degradation. In complex with ced-3, required for the ced-3-mediated cleavage and subsequent degradation of the heterochronic protein lin-28 to regulate seam cell fate patterning during larval development. Negatively regulates glutamate metabolism through the aspartate aminotransferase got-1.2. Modulation of glutamate levels most likely controls locomotory behavior, in particular backwards locomotion or 'reversals'. The protein is E3 ubiquitin-protein ligase ubr-1 of Caenorhabditis elegans.